The chain runs to 226 residues: Thiamine-phosphate synthase (226 aa).

Residues glutamine 46 to lysine 50 and asparagine 87 each bind 4-amino-2-methyl-5-(diphosphooxymethyl)pyrimidine. Mg(2+)-binding residues include aspartate 88 and aspartate 107. Residue serine 126 participates in 4-amino-2-methyl-5-(diphosphooxymethyl)pyrimidine binding. Threonine 152–threonine 154 is a binding site for 2-[(2R,5Z)-2-carboxy-4-methylthiazol-5(2H)-ylidene]ethyl phosphate. Lysine 155 contributes to the 4-amino-2-methyl-5-(diphosphooxymethyl)pyrimidine binding site. Glycine 183 lines the 2-[(2R,5Z)-2-carboxy-4-methylthiazol-5(2H)-ylidene]ethyl phosphate pocket.

It belongs to the thiamine-phosphate synthase family. Requires Mg(2+) as cofactor.

The enzyme catalyses 2-[(2R,5Z)-2-carboxy-4-methylthiazol-5(2H)-ylidene]ethyl phosphate + 4-amino-2-methyl-5-(diphosphooxymethyl)pyrimidine + 2 H(+) = thiamine phosphate + CO2 + diphosphate. The catalysed reaction is 2-(2-carboxy-4-methylthiazol-5-yl)ethyl phosphate + 4-amino-2-methyl-5-(diphosphooxymethyl)pyrimidine + 2 H(+) = thiamine phosphate + CO2 + diphosphate. It catalyses the reaction 4-methyl-5-(2-phosphooxyethyl)-thiazole + 4-amino-2-methyl-5-(diphosphooxymethyl)pyrimidine + H(+) = thiamine phosphate + diphosphate. It functions in the pathway cofactor biosynthesis; thiamine diphosphate biosynthesis; thiamine phosphate from 4-amino-2-methyl-5-diphosphomethylpyrimidine and 4-methyl-5-(2-phosphoethyl)-thiazole: step 1/1. In terms of biological role, condenses 4-methyl-5-(beta-hydroxyethyl)thiazole monophosphate (THZ-P) and 2-methyl-4-amino-5-hydroxymethyl pyrimidine pyrophosphate (HMP-PP) to form thiamine monophosphate (TMP). This Mycobacterium sp. (strain JLS) protein is Thiamine-phosphate synthase.